A 206-amino-acid polypeptide reads, in one-letter code: Small ribosomal subunit protein uS4 (206 aa).

Positions 96-156 constitute an S4 RNA-binding domain; the sequence is NRLDNVTYRI…KNSKLQSRIK (61 aa).

It belongs to the universal ribosomal protein uS4 family. In terms of assembly, part of the 30S ribosomal subunit. Contacts protein S5. The interaction surface between S4 and S5 is involved in control of translational fidelity.

In terms of biological role, one of the primary rRNA binding proteins, it binds directly to 16S rRNA where it nucleates assembly of the body of the 30S subunit. Functionally, with S5 and S12 plays an important role in translational accuracy. This chain is Small ribosomal subunit protein uS4, found in Buchnera aphidicola subsp. Baizongia pistaciae (strain Bp).